The chain runs to 351 residues: Foldase protein PrsA 1 (351 aa).

A signal peptide spans 1–22 (MKNSNKLIASVVTLASVMALAA). Cysteine 23 carries N-palmitoyl cysteine lipidation. Cysteine 23 carries S-diacylglycerol cysteine lipidation. The PpiC domain occupies 145-240 (TPTMAVEMIT…KKFYIVKVTK (96 aa)). 2 stretches are compositionally biased toward low complexity: residues 303–317 (KTKA…SESS) and 326–351 (ESEQ…PAAQ). The segment at 303–351 (KTKAASESSTTSESSKAAEENPSESEQTQTSSAEEPTETEAQTQEPAAQ) is disordered.

It belongs to the PrsA family.

The protein resides in the cell membrane. The enzyme catalyses [protein]-peptidylproline (omega=180) = [protein]-peptidylproline (omega=0). In terms of biological role, plays a major role in protein secretion by helping the post-translocational extracellular folding of several secreted proteins. This chain is Foldase protein PrsA 1, found in Streptococcus pyogenes serotype M6 (strain ATCC BAA-946 / MGAS10394).